The following is a 225-amino-acid chain: Ribonuclease 3 (225 aa).

Residues 4-127 enclose the RNase III domain; that stretch reads IEKLEQSLTY…IIGAIHLEAG (124 aa). Mg(2+) is bound at residue glutamate 40. Aspartate 44 is a catalytic residue. Residues aspartate 113 and glutamate 116 each coordinate Mg(2+). Glutamate 116 is a catalytic residue. Positions 154 to 223 constitute a DRBM domain; the sequence is DYKTKLQEIT…AKIALEKLGS (70 aa).

This sequence belongs to the ribonuclease III family. Homodimer. The cofactor is Mg(2+).

It is found in the cytoplasm. It catalyses the reaction Endonucleolytic cleavage to 5'-phosphomonoester.. Functionally, digests double-stranded RNA. Involved in the processing of primary rRNA transcript to yield the immediate precursors to the large and small rRNAs (23S and 16S). Processes some mRNAs, and tRNAs when they are encoded in the rRNA operon. Processes pre-crRNA and tracrRNA of type II CRISPR loci if present in the organism. The sequence is that of Ribonuclease 3 from Campylobacter jejuni subsp. doylei (strain ATCC BAA-1458 / RM4099 / 269.97).